A 363-amino-acid chain; its full sequence is Jasmonate-induced oxygenase 3 (363 aa).

Residues 210-312 (ESGGCLRVNY…RLSLAFFYNP (103 aa)) enclose the Fe2OG dioxygenase domain. Arg-216 provides a ligand contact to jasmonate. 2-oxoglutarate is bound by residues Asn-218 and Tyr-220. Fe cation-binding residues include His-235, Asp-237, and His-293. 2 residues coordinate 2-oxoglutarate: Arg-303 and Ser-305. Jasmonate contacts are provided by Arg-342 and Arg-346.

This sequence belongs to the iron/ascorbate-dependent oxidoreductase family. The cofactor is L-ascorbate. It depends on Fe(2+) as a cofactor.

The enzyme catalyses jasmonate + 2-oxoglutarate + O2 = (1R,2R)-12-hydroxyjasmonate + succinate + CO2. Functionally, 2-oxoglutarate-dependent dioxygenase involved in the oxidation of jasmonate (JA), a stress-induced phytohormone synthesized in response to attack by pathogens and herbivores, which triggers the activation of defense responses via the JA-mediated signaling pathway. Converts JA to 12-hydroxyjasmonate (12OH-JA), an inactive form of JA. Is specific to free JA, and cannot oxidize the bioactive form jasmonoyl-L-isoleucine (JA-Ile) or other JA-amino acid conjugates. Prevents over-accumulation of JA and indirectly its bioactive form JA-Ile under stress response. Acts as a negative regulator of JA-mediated defense signaling, by contributing to 12OH-JA accumulation, which represses JA defense responses upon infection by the fungal pathogen Botrytis cinerea. Acts as a negative regulator of JA-mediated defense responses upon infestation by the herbivorous caterpillar Mamestra brassicae. The protein is Jasmonate-induced oxygenase 3 of Arabidopsis thaliana (Mouse-ear cress).